The chain runs to 696 residues: Lutropin-choriogonadotropic hormone receptor (696 aa).

Residues 1 to 27 (MRRRSLALRLLLALLLLPPPLPQTLLG) form the signal peptide. The Extracellular segment spans residues 28–358 (APCPEPCSCR…AFNPCEDIMG (331 aa)). N99 carries an N-linked (GlcNAc...) asparagine glycan. LRR repeat units lie at residues 122–147 (LPRLKYLSICNTGIRKLPDVTKIFSS), 149–171 (FNFILEICDNLHITTVPANAFQG), 172–196 (MNNESITLKLYGNGFEEIQSHAFNG), 198–220 (TLISLELKENAHLKKMHNDAFRG), 221–244 (ARGPSILDISSTKLQALPSYGLES), and 250–271 (ATSSYSLKKLPSREKFTNLLDA). N-linked (GlcNAc...) asparagine glycans are attached at residues N174 and N195. N291, N299, and N313 each carry an N-linked (GlcNAc...) asparagine glycan. The residue at position 331 (Y331) is a Sulfotyrosine. Residues 359 to 386 (YDFLRVLIWLINILAIMGNVTVLFVLLT) form a helical membrane-spanning segment. The Cytoplasmic segment spans residues 387-395 (SHYKLTVPR). Residues 396-418 (FLMCNLSFADFCMGLYLLLIASV) form a helical membrane-spanning segment. At 419-439 (DAQTKGQYYNHAIDWQTGNGC) the chain is on the extracellular side. A disulfide bond links C439 and C514. A helical transmembrane segment spans residues 440–462 (SVAGFFTVFASELSVYTLTVITL). The Cytoplasmic portion of the chain corresponds to 463–482 (ERWHTITYAIQLDQKLRLRH). The helical transmembrane segment at 483 to 505 (AIPIMLGGWLFSTLIAMLPLVGV) threads the bilayer. Residues 506–525 (SSYMKVSICLPMDVETTLSQ) lie on the Extracellular side of the membrane. The chain crosses the membrane as a helical span at residues 526-547 (VYILTILILNVVAFIIICACYI). Topologically, residues 548 to 570 (KIYFAVQNPELMATNKDTKIAKK) are cytoplasmic. The helical transmembrane segment at 571-594 (MAVLIFTDFTCMAPISFFAISAAL) threads the bilayer. Residues 595–605 (KVPLITVTNSK) are Extracellular-facing. A helical membrane pass occupies residues 606-626 (VLLVLFYPVNSCANPFLYAIF). Residues 627 to 696 (TKAFRRDFFL…VMDKTCYKDC (70 aa)) lie on the Cytoplasmic side of the membrane. 2 S-palmitoyl cysteine lipidation sites follow: C643 and C644.

This sequence belongs to the G-protein coupled receptor 1 family. FSH/LSH/TSH subfamily. In terms of processing, sulfated.

It is found in the cell membrane. Its function is as follows. Receptor for lutropin-choriogonadotropic hormone. The activity of this receptor is mediated by G proteins which activate adenylate cyclase. The sequence is that of Lutropin-choriogonadotropic hormone receptor (LHCGR) from Sus scrofa (Pig).